Reading from the N-terminus, the 621-residue chain is Bifunctional 3'-phosphoadenosine 5'-phosphosulfate synthase 2 (621 aa).

The tract at residues 1 to 216 (MSANFKMNHK…VVELLQEQNI (216 aa)) is adenylyl-sulfate kinase. 53 to 58 (GAGKTT) serves as a coordination point for ATP. Adenosine 5'-phosphosulfate contacts are provided by residues 80–83 (DNVR), Phe92, 97–100 (REEN), 123–124 (IS), Lys162, and 175–176 (GF). ATP is bound by residues Ser198, 415 to 418 (QLRN), 517 to 521 (GRDPA), and Ala559. Residues 225–621 (IHELFVPENK…DYYRSLEKTN (397 aa)) form a sulfate adenylyltransferase region.

This sequence in the N-terminal section; belongs to the APS kinase family. The protein in the C-terminal section; belongs to the sulfate adenylyltransferase family. In terms of tissue distribution, expressed in liver, cartilage, skin and brain.

The enzyme catalyses sulfate + ATP + H(+) = adenosine 5'-phosphosulfate + diphosphate. The catalysed reaction is adenosine 5'-phosphosulfate + ATP = 3'-phosphoadenylyl sulfate + ADP + H(+). It functions in the pathway sulfur metabolism; sulfate assimilation. Functionally, bifunctional enzyme with both ATP sulfurylase and APS kinase activity, which mediates two steps in the sulfate activation pathway. The first step is the transfer of a sulfate group to ATP to yield adenosine 5'-phosphosulfate (APS), and the second step is the transfer of a phosphate group from ATP to APS yielding 3'-phosphoadenylylsulfate/PAPS, the activated sulfate donor used by sulfotransferases. In mammals, PAPS is the sole source of sulfate while APS appears to only be an intermediate in the sulfate-activation pathway. May have an important role in skeletogenesis during postnatal growth. The chain is Bifunctional 3'-phosphoadenosine 5'-phosphosulfate synthase 2 (Papss2) from Mus musculus (Mouse).